Consider the following 258-residue polypeptide: UPF0246 protein YaaA (258 aa).

Belongs to the UPF0246 family.

This is UPF0246 protein YaaA from Shigella dysenteriae serotype 1 (strain Sd197).